The sequence spans 156 residues: Ribosome maturation factor RimP (156 aa).

This sequence belongs to the RimP family.

It localises to the cytoplasm. Its function is as follows. Required for maturation of 30S ribosomal subunits. This is Ribosome maturation factor RimP from Shouchella clausii (strain KSM-K16) (Alkalihalobacillus clausii).